Reading from the N-terminus, the 279-residue chain is Pantothenate synthetase (279 aa).

Residue 26–33 (MGNLHDGH) participates in ATP binding. The active-site Proton donor is His-33. Gln-57 lines the (R)-pantoate pocket. Gln-57 provides a ligand contact to beta-alanine. 144–147 (GKKD) is a binding site for ATP. Gln-150 serves as a coordination point for (R)-pantoate. 181 to 184 (LSSR) contributes to the ATP binding site.

Belongs to the pantothenate synthetase family. In terms of assembly, homodimer.

The protein resides in the cytoplasm. The catalysed reaction is (R)-pantoate + beta-alanine + ATP = (R)-pantothenate + AMP + diphosphate + H(+). It participates in cofactor biosynthesis; (R)-pantothenate biosynthesis; (R)-pantothenate from (R)-pantoate and beta-alanine: step 1/1. Its function is as follows. Catalyzes the condensation of pantoate with beta-alanine in an ATP-dependent reaction via a pantoyl-adenylate intermediate. In Janthinobacterium sp. (strain Marseille) (Minibacterium massiliensis), this protein is Pantothenate synthetase.